Reading from the N-terminus, the 333-residue chain is Transcription factor HHO6 (333 aa).

Residues Ala189–Arg249 form the HTH myb-type domain. Positions Pro220–Arg245 form a DNA-binding region, H-T-H motif. The tract at residues Asp274–Pro333 is disordered. A compositionally biased stretch (polar residues) spans Arg287 to Ser303. The span at Asp319–Pro333 shows a compositional bias: basic and acidic residues.

It localises to the nucleus. Probable transcription factor involved in phosphate signaling in roots. This Arabidopsis thaliana (Mouse-ear cress) protein is Transcription factor HHO6.